The chain runs to 87 residues: Large ribosomal subunit protein bL27 (87 aa).

Positions 1–24 (MAHKKGTGSTRNGRDSRSQRLGVK) are disordered.

This sequence belongs to the bacterial ribosomal protein bL27 family.

In Crocosphaera subtropica (strain ATCC 51142 / BH68) (Cyanothece sp. (strain ATCC 51142)), this protein is Large ribosomal subunit protein bL27.